A 308-amino-acid chain; its full sequence is Zinc-binding protein TroA (308 aa).

A signal peptide spans 1-22 (MIRERICACVLALGMLTGFTHA). Zn(2+)-binding residues include H68, H133, H199, and D279.

Belongs to the bacterial solute-binding protein 9 family. In terms of assembly, monomer.

Its subcellular location is the periplasm. Its function is as follows. Part of the ATP-binding cassette (ABC) transport system TroABC involved in zinc import. Binds zinc with high affinity and specificity and delivers it to the membrane permease for translocation into the cytoplasm. This is Zinc-binding protein TroA (troA) from Treponema pallidum (strain Nichols).